The sequence spans 95 residues: MNNKLTALIFLGLLAIASCKWLNEKSIQNKIDEKIGKNFLGGMAKAVVHKLAKNEFMCVANIDMTKSCDTHCQKASGEKGYCHGTKCKCGVPLSY.

Residues 1–19 form the signal peptide; the sequence is MNNKLTALIFLGLLAIASC. Residues 55–95 form the BetaSPN-type CS-alpha/beta domain; sequence EFMCVANIDMTKSCDTHCQKASGEKGYCHGTKCKCGVPLSY. Disulfide bonds link cysteine 58–cysteine 82, cysteine 68–cysteine 87, and cysteine 72–cysteine 89.

This sequence belongs to the long chain scorpion toxin family. Class 3 subfamily. In terms of tissue distribution, expressed by the venom gland.

Its subcellular location is the secreted. Its function is as follows. Has antimicrobial activity against yeasts and bacteria. This chain is Opiscorpine-4, found in Opistophthalmus carinatus (African yellow leg scorpion).